We begin with the raw amino-acid sequence, 228 residues long: Aquaporin Z 2 (228 aa).

Transmembrane regions (helical) follow at residues 9–29 (FFGT…AAAF) and 34–54 (IGFT…AYAV). The NPA 1 signature appears at 63–65 (NPA). Transmembrane regions (helical) follow at residues 82–102 (VPYV…LYVI), 129–149 (LVSA…VILG), and 158–178 (GFAP…SIPV). The short motif at 184–186 (NPA) is the NPA 2 element. A helical membrane pass occupies residues 204-224 (WLFWLAPIVGGAAGAVIWKLF).

The protein belongs to the MIP/aquaporin (TC 1.A.8) family. As to quaternary structure, homotetramer.

It is found in the cell inner membrane. The enzyme catalyses H2O(in) = H2O(out). Its function is as follows. Channel that permits osmotically driven movement of water in both directions. It is involved in the osmoregulation and in the maintenance of cell turgor during volume expansion in rapidly growing cells. It mediates rapid entry or exit of water in response to abrupt changes in osmolarity. The chain is Aquaporin Z 2 from Agrobacterium fabrum (strain C58 / ATCC 33970) (Agrobacterium tumefaciens (strain C58)).